The chain runs to 439 residues: Glutamate--tRNA ligase 2 (439 aa).

A 'HIGH' region motif is present at residues 6–16; the sequence is PSPTGDMHIGN. Residues 232-236 carry the 'KMSKS' region motif; it reads KMSKR. ATP is bound at residue K235.

Belongs to the class-I aminoacyl-tRNA synthetase family. Glutamate--tRNA ligase type 1 subfamily. As to quaternary structure, monomer.

It is found in the cytoplasm. It catalyses the reaction tRNA(Glu) + L-glutamate + ATP = L-glutamyl-tRNA(Glu) + AMP + diphosphate. Functionally, catalyzes the attachment of glutamate to tRNA(Glu) in a two-step reaction: glutamate is first activated by ATP to form Glu-AMP and then transferred to the acceptor end of tRNA(Glu). The chain is Glutamate--tRNA ligase 2 from Helicobacter pylori (strain P12).